Consider the following 339-residue polypeptide: Putative adenosine/adenine deaminase (339 aa).

Zn(2+) contacts are provided by His-16, His-18, and His-200. Residue His-18 participates in substrate binding. Glu-203 functions as the Proton donor in the catalytic mechanism. Asp-281 is a Zn(2+) binding site. Position 282 (Asp-282) interacts with substrate.

The protein belongs to the metallo-dependent hydrolases superfamily. Adenosine and AMP deaminases family. Zn(2+) serves as cofactor.

In terms of biological role, putative nucleoside deaminase. May catalyze the hydrolytic deamination of adenosine or some similar substrate and play a role in purine metabolism. The polypeptide is Putative adenosine/adenine deaminase (Streptomyces virginiae (Streptomyces cinnamonensis)).